A 120-amino-acid polypeptide reads, in one-letter code: Alpha-amylase inhibitor Haim-2 (120 aa).

The N-terminal stretch at 1–32 (MKRYVCSTFVACVMVLCVIPASGAAAHEAVAE) is a signal peptide. 2 disulfides stabilise this stretch: C43–C59 and C77–C104.

In terms of biological role, inhibits mammalian alpha-amylases specifically but has no action on plant and microbial alpha-amylases. This Streptomyces griseosporeus protein is Alpha-amylase inhibitor Haim-2.